A 524-amino-acid polypeptide reads, in one-letter code: Probable myosin-binding protein 5 (524 aa).

A helical transmembrane segment spans residues 20–40 (FLIYALLEWILIIILFIDGFL). The 99-residue stretch at 299-397 (SILQHLNRQV…ELEAGIEVYR (99 aa)) folds into the GTD-binding domain. Residues 462–490 (SRKDMLVKEISEITERLNAIESKGELLQQ) adopt a coiled-coil conformation.

The protein localises to the membrane. In terms of biological role, probable membrane-anchored myosin receptors. In Arabidopsis thaliana (Mouse-ear cress), this protein is Probable myosin-binding protein 5.